The chain runs to 422 residues: Inhibitor of growth protein 1 (422 aa).

Residues 261-349 form a disordered region; sequence ELGDTAGNSG…EASPADLPID (89 aa). Lysine 278 is covalently cross-linked (Glycyl lysine isopeptide (Lys-Gly) (interchain with G-Cter in SUMO2)). The span at 297–314 shows a compositional bias: basic and acidic residues; the sequence is RNNENRENASSNHDHDDG. A compositionally biased stretch (basic residues) spans 322–334; it reads KKAKTSKKKKRSK. Residues 353-402 form a PHD-type zinc finger; sequence PTYCLCNQVSYGEMIGCDNDECPIEWFHFSCVGLNHKPKGKWYCPKCRGE. Zn(2+)-binding residues include cysteine 356, cysteine 358, cysteine 369, cysteine 374, histidine 380, cysteine 383, cysteine 396, and cysteine 399. Residues 405-422 form a PBR region; it reads KTMDKALEKSKKERAYNR.

It belongs to the ING family. Interacts with H3K4me3 and to a lesser extent with H3K4me2. Interacts with TP53. Isoform 2 interacts with RSL1D1. As to expression, isoform 2 was expressed in all normal tissues and cells examined, as well as in all breast cancer and melanoma cell lines examined. Isoform 3 was expressed in testis, liver, and kidney, weakly expressed in colon and brain and not expressed in breast and cultured melanocytes. Isoform 4 was highly expressed in testis and weakly expressed in brain, but not expressed in breast, colon, kidney, melanocytes, breast cancer or melanoma cell lines.

Its subcellular location is the nucleus. Cooperates with p53/TP53 in the negative regulatory pathway of cell growth by modulating p53-dependent transcriptional activation. Implicated as a tumor suppressor gene. The protein is Inhibitor of growth protein 1 (ING1) of Homo sapiens (Human).